The following is a 385-amino-acid chain: Mannitol-1-phosphate 5-dehydrogenase (385 aa).

3–14 (DVHFGAGNIGRG) lines the NAD(+) pocket.

It belongs to the mannitol dehydrogenase family.

It catalyses the reaction D-mannitol 1-phosphate + NAD(+) = beta-D-fructose 6-phosphate + NADH + H(+). The sequence is that of Mannitol-1-phosphate 5-dehydrogenase from Lactiplantibacillus plantarum (strain ATCC BAA-793 / NCIMB 8826 / WCFS1) (Lactobacillus plantarum).